The primary structure comprises 321 residues: Putative ribose-phosphate pyrophosphokinase 2 (321 aa).

ATP-binding positions include 41 to 43 (DGE) and 100 to 101 (RQ). Residue H134 coordinates Mg(2+). D-ribose 5-phosphate is bound by residues D223 and 227–231 (NTGVT).

Belongs to the ribose-phosphate pyrophosphokinase family. Class I subfamily. Homohexamer. It depends on Mg(2+) as a cofactor.

The protein resides in the cytoplasm. It carries out the reaction D-ribose 5-phosphate + ATP = 5-phospho-alpha-D-ribose 1-diphosphate + AMP + H(+). It functions in the pathway metabolic intermediate biosynthesis; 5-phospho-alpha-D-ribose 1-diphosphate biosynthesis; 5-phospho-alpha-D-ribose 1-diphosphate from D-ribose 5-phosphate (route I): step 1/1. Its function is as follows. Involved in the biosynthesis of the central metabolite phospho-alpha-D-ribosyl-1-pyrophosphate (PRPP) via the transfer of pyrophosphoryl group from ATP to 1-hydroxyl of ribose-5-phosphate (Rib-5-P). The protein is Putative ribose-phosphate pyrophosphokinase 2 of Lactococcus lactis subsp. lactis (strain IL1403) (Streptococcus lactis).